The primary structure comprises 506 residues: Glutamate--tRNA ligase (506 aa).

The 'HIGH' region signature appears at 9–19 (PSPTGFQHIGG). The 'KMSKS' region motif lies at 251 to 255 (KLSKR). Lysine 254 is an ATP binding site.

Belongs to the class-I aminoacyl-tRNA synthetase family. Glutamate--tRNA ligase type 1 subfamily. Monomer.

The protein localises to the cytoplasm. The catalysed reaction is tRNA(Glu) + L-glutamate + ATP = L-glutamyl-tRNA(Glu) + AMP + diphosphate. Its function is as follows. Catalyzes the attachment of glutamate to tRNA(Glu) in a two-step reaction: glutamate is first activated by ATP to form Glu-AMP and then transferred to the acceptor end of tRNA(Glu). The chain is Glutamate--tRNA ligase from Treponema denticola (strain ATCC 35405 / DSM 14222 / CIP 103919 / JCM 8153 / KCTC 15104).